Here is a 335-residue protein sequence, read N- to C-terminus: DNA-directed RNA polymerase subunit alpha (335 aa).

The segment at 1–231 is alpha N-terminal domain (alpha-NTD); sequence MVREKITVST…DLLIPFLHTK (231 aa). The interval 263-335 is alpha C-terminal domain (alpha-CTD); that stretch reads KKMALKSIFI…FVIDLPKNKF (73 aa).

This sequence belongs to the RNA polymerase alpha chain family. In plastids the minimal PEP RNA polymerase catalytic core is composed of four subunits: alpha, beta, beta', and beta''. When a (nuclear-encoded) sigma factor is associated with the core the holoenzyme is formed, which can initiate transcription.

The protein localises to the plastid. Its subcellular location is the chloroplast. The enzyme catalyses RNA(n) + a ribonucleoside 5'-triphosphate = RNA(n+1) + diphosphate. In terms of biological role, DNA-dependent RNA polymerase catalyzes the transcription of DNA into RNA using the four ribonucleoside triphosphates as substrates. The chain is DNA-directed RNA polymerase subunit alpha from Helianthus annuus (Common sunflower).